The sequence spans 191 residues: MSELKTLSVRKRDGLGKGANRKLRAKTLVPGVFYNAEGLNVPIEMDTLPVEKLFEAVGRTTVFNIEVDDNGTKSTHPALFWQIQYHPVKNRFSHIDFRGVDLEKPVKIRVPLEFTGTAKGVKVGGKLEVYREALDISAKPLQMPSKITIDLTDLEIGKTISVNDLPLGEGVCAVADRNFAIVAVVSPKGEE.

The protein belongs to the bacterial ribosomal protein bL25 family. CTC subfamily. Part of the 50S ribosomal subunit; part of the 5S rRNA/L5/L18/L25 subcomplex. Contacts the 5S rRNA. Binds to the 5S rRNA independently of L5 and L18.

Functionally, this is one of the proteins that binds to the 5S RNA in the ribosome where it forms part of the central protuberance. This chain is Large ribosomal subunit protein bL25, found in Nitratidesulfovibrio vulgaris (strain DSM 19637 / Miyazaki F) (Desulfovibrio vulgaris).